The primary structure comprises 435 residues: ATP-dependent protease ATPase subunit HslU (435 aa).

Residues Ile18, 60-65 (GVGKTE), Asp248, Glu313, and Arg385 contribute to the ATP site.

The protein belongs to the ClpX chaperone family. HslU subfamily. In terms of assembly, a double ring-shaped homohexamer of HslV is capped on each side by a ring-shaped HslU homohexamer. The assembly of the HslU/HslV complex is dependent on binding of ATP.

The protein resides in the cytoplasm. ATPase subunit of a proteasome-like degradation complex; this subunit has chaperone activity. The binding of ATP and its subsequent hydrolysis by HslU are essential for unfolding of protein substrates subsequently hydrolyzed by HslV. HslU recognizes the N-terminal part of its protein substrates and unfolds these before they are guided to HslV for hydrolysis. The chain is ATP-dependent protease ATPase subunit HslU from Rhizobium etli (strain ATCC 51251 / DSM 11541 / JCM 21823 / NBRC 15573 / CFN 42).